The primary structure comprises 366 residues: Ribosomal RNA large subunit methyltransferase M (366 aa).

S-adenosyl-L-methionine is bound by residues Ser-188, 221 to 224 (CPGG), Asp-240, Asp-260, and Asp-277. Catalysis depends on Lys-306, which acts as the Proton acceptor.

Belongs to the class I-like SAM-binding methyltransferase superfamily. RNA methyltransferase RlmE family. RlmM subfamily. In terms of assembly, monomer.

The protein localises to the cytoplasm. The enzyme catalyses cytidine(2498) in 23S rRNA + S-adenosyl-L-methionine = 2'-O-methylcytidine(2498) in 23S rRNA + S-adenosyl-L-homocysteine + H(+). In terms of biological role, catalyzes the 2'-O-methylation at nucleotide C2498 in 23S rRNA. The sequence is that of Ribosomal RNA large subunit methyltransferase M from Sodalis glossinidius (strain morsitans).